Consider the following 116-residue polypeptide: S-adenosylmethionine decarboxylase proenzyme (116 aa).

Catalysis depends on Ser-63, which acts as the Schiff-base intermediate with substrate; via pyruvic acid. Ser-63 carries the post-translational modification Pyruvic acid (Ser); by autocatalysis. The Proton acceptor; for processing activity role is filled by His-68. The active-site Proton donor; for catalytic activity is the Cys-83.

Belongs to the prokaryotic AdoMetDC family. Type 1 subfamily. As to quaternary structure, heterotetramer of two alpha and two beta chains arranged as a dimer of alpha/beta heterodimers. Pyruvate is required as a cofactor. Is synthesized initially as an inactive proenzyme. Formation of the active enzyme involves a self-maturation process in which the active site pyruvoyl group is generated from an internal serine residue via an autocatalytic post-translational modification. Two non-identical subunits are generated from the proenzyme in this reaction, and the pyruvate is formed at the N-terminus of the alpha chain, which is derived from the carboxyl end of the proenzyme. The post-translation cleavage follows an unusual pathway, termed non-hydrolytic serinolysis, in which the side chain hydroxyl group of the serine supplies its oxygen atom to form the C-terminus of the beta chain, while the remainder of the serine residue undergoes an oxidative deamination to produce ammonia and the pyruvoyl group blocking the N-terminus of the alpha chain.

It catalyses the reaction S-adenosyl-L-methionine + H(+) = S-adenosyl 3-(methylsulfanyl)propylamine + CO2. It participates in amine and polyamine biosynthesis; S-adenosylmethioninamine biosynthesis; S-adenosylmethioninamine from S-adenosyl-L-methionine: step 1/1. Catalyzes the decarboxylation of S-adenosylmethionine to S-adenosylmethioninamine (dcAdoMet), the propylamine donor required for the synthesis of the polyamines spermine and spermidine from the diamine putrescine. The polypeptide is S-adenosylmethionine decarboxylase proenzyme (Clostridium botulinum (strain Okra / Type B1)).